The following is a 977-amino-acid chain: Short transient receptor potential channel 4 (977 aa).

Residues 1–324 lie on the Cytoplasmic side of the membrane; that stretch reads MAQFYYKRNV…YDEFPGWRRR (324 aa). ANK repeat units lie at residues 29–60, 71–93, 96–118, and 141–165; these read LSPS…IYFK, RTAL…LSFN, VGDA…LLNH, and PDIT…VQKG. Zn(2+) is bound by residues H172, C176, C178, and C181. Residues 223–260 adopt a coiled-coil conformation; sequence LSWELQELSKVENEFKSEYEELSRQCKQFAKDLLDQTR. Residues 325–359 constitute an intramembrane region (discontinuously helical); the sequence is HWAVKMVTCFIIGLLFPVFSVCYLIAPKSPLGLFI. Topologically, residues 360 to 362 are cytoplasmic; the sequence is RKP. Residues 363-383 form a helical membrane-spanning segment; the sequence is FIKFICHTASYLTFLFLLLLA. Residues 384–403 lie on the Extracellular side of the membrane; it reads SQHIDRSDLNRQGPPPTIVE. Residues 404-418 form a helical membrane-spanning segment; that stretch reads WMILPWVLGFIWGEI. 4 residues coordinate Ca(2+): E417, Q420, N435, and D438. Topologically, residues 419–432 are cytoplasmic; the sequence is KQMWDGGLQDYIHD. The chain crosses the membrane as a helical span at residues 433-453; sequence WWNLMDFVMNSLYLATISLKI. Over 454–475 the chain is Extracellular; it reads VAFVKYSALNPRESWDMWHPTL. A helical transmembrane segment spans residues 476–498; it reads VAEALFAIANIFSSLRLISLFTA. The Cytoplasmic segment spans residues 499–511; that stretch reads NSHLGPLQISLGR. Residues 512 to 534 traverse the membrane as a helical segment; it reads MLLDILKFLFIYCLVLLAFANGL. Residues 535–599 are Extracellular-facing; sequence NQLYFYYEET…HEFTEFVGAT (65 aa). The cysteines at positions 549 and 554 are disulfide-linked. The chain crosses the membrane as a helical span at residues 600–620; sequence MFGTYNVISLVVLLNMLIAMM. The segment at 615–977 is interaction with ITPR1, ITPR2 and ITPR3; the sequence is MLIAMMNNSY…THEDYVTTRL (363 aa). Residues 621-977 lie on the Cytoplasmic side of the membrane; sequence NNSYQLIADH…THEDYVTTRL (357 aa). Residues 762–790 form a disordered region; the sequence is IQSANASKESSNSADSDEKSDSEGNSKDK. Residues 764 to 775 show a composition bias toward low complexity; it reads SANASKESSNSA. A compositionally biased stretch (basic and acidic residues) spans 777 to 788; the sequence is SDEKSDSEGNSK. 2 positions are modified to phosphotyrosine; by FYN: Y959 and Y972. Residues 975-977 are PDZ-binding domain; it reads TRL.

It belongs to the transient receptor (TC 1.A.4) family. STrpC subfamily. TRPC4 sub-subfamily. Homotetramer. Heterotetramer with TRPC1 and/or TRPC5. Forms a heteromeric ion channel with TRPC1, with a 1:3 TRPC1:TRPC4 stoichiometry. Interacts with TRPC4AP. Isoform alpha but not isoform beta interacts with ITPR1, ITPR2 and ITPR3. Interacts with (via PDZ-binding domain) with NHERF1. Interacts with MX1 and RNF24. Interacts (via CIRB domain) with SESTD1 (via spectrin 1 repeat). Interacts with CDH5 and CTNNB1. Interacts with SPTAN1 (via C-terminal spectrin repeats) and SPTBN5 (via C-terminus). Interacts (via protein 4.1-binding domain) with EPB41L2. Interacts with PLSCR1. Phosphorylation modulates TRPC channel function by regulating the level of TRPC4 at the cell surface and by increasing the association with NHERF1. Strongly expressed in placenta. Expressed at lower levels in heart, pancreas, kidney and brain. Expressed in endothelial cells. Isoform alpha was found to be the predominant isoform. Isoform beta was not found in pancreas and brain.

It is found in the cell membrane. The catalysed reaction is Ca(2+)(in) = Ca(2+)(out). The enzyme catalyses Na(+)(in) = Na(+)(out). It carries out the reaction Li(+)(in) = Li(+)(out). It catalyses the reaction Cs(+)(in) = Cs(+)(out). May be operated by a phosphatidylinositol second messenger system activated by receptor tyrosine kinases or G-protein coupled receptors. May be activated by intracellular calcium store depletion. Inhibited by xanthine-based inhibitor Pico145. Its function is as follows. Forms a receptor-activated non-selective calcium permeant cation channel. Acts as a cell-cell contact-dependent endothelial calcium entry channel. Forms a homomeric ion channel or a heteromeric ion channel with TRPC1; the heteromeric ion channel has reduced calcium permeability compared to the homomeric channel. Also permeable to monovalent ions including sodium, lithium and cesium ions. Forms a receptor-activated non-selective calcium permeant cation channel. This is Short transient receptor potential channel 4 (TRPC4) from Homo sapiens (Human).